The following is a 489-amino-acid chain: Cytochrome P450 302a1, mitochondrial (489 aa).

C434 lines the heme pocket.

It belongs to the cytochrome P450 family. Heme is required as a cofactor. In terms of tissue distribution, complex coexpression pattern of dib (disembodied) and sad (shade) in the early embryo that restricts to the prothoracic gland cells of the developing ring gland during late embryogenesis. In larvae and adult, coexpression is seen in prothoracic gland and follicle cells of the ovary. In adults, coexpression is seen in the follicle cells.

It localises to the mitochondrion membrane. The catalysed reaction is 2,22-dideoxyecdysone + 2 reduced [adrenodoxin] + O2 + 2 H(+) = 2-deoxyecdysone + 2 oxidized [adrenodoxin] + H2O. The protein operates within steroid biosynthesis; ecdysteroid biosynthesis. Required for CNS development; negatively regulates glial cell division in the embryonic midline. Involved in the metabolism of insect hormones; responsible for ecdysteroid C22-hydroxylase activity. May be involved in the breakdown of synthetic insecticides. The polypeptide is Cytochrome P450 302a1, mitochondrial (Drosophila melanogaster (Fruit fly)).